The chain runs to 347 residues: Holliday junction branch migration complex subunit RuvB (347 aa).

Residues 13 to 195 (NEDAVTSGEV…FGIVEHMQYY (183 aa)) are large ATPase domain (RuvB-L). ATP contacts are provided by residues leucine 34, arginine 35, glycine 76, lysine 79, threonine 80, threonine 81, 142 to 144 (EDY), arginine 185, tyrosine 195, and arginine 232. Threonine 80 is a Mg(2+) binding site. Positions 196–266 (TIDELEKIVQ…TTEGALKQLQ (71 aa)) are small ATPAse domain (RuvB-S). The head domain (RuvB-H) stretch occupies residues 269 to 347 (DEGLDQTDRR…QLGLPVPGDK (79 aa)). Arginine 329 serves as a coordination point for DNA.

It belongs to the RuvB family. As to quaternary structure, homohexamer. Forms an RuvA(8)-RuvB(12)-Holliday junction (HJ) complex. HJ DNA is sandwiched between 2 RuvA tetramers; dsDNA enters through RuvA and exits via RuvB. An RuvB hexamer assembles on each DNA strand where it exits the tetramer. Each RuvB hexamer is contacted by two RuvA subunits (via domain III) on 2 adjacent RuvB subunits; this complex drives branch migration. In the full resolvosome a probable DNA-RuvA(4)-RuvB(12)-RuvC(2) complex forms which resolves the HJ.

Its subcellular location is the cytoplasm. It catalyses the reaction ATP + H2O = ADP + phosphate + H(+). Functionally, the RuvA-RuvB-RuvC complex processes Holliday junction (HJ) DNA during genetic recombination and DNA repair, while the RuvA-RuvB complex plays an important role in the rescue of blocked DNA replication forks via replication fork reversal (RFR). RuvA specifically binds to HJ cruciform DNA, conferring on it an open structure. The RuvB hexamer acts as an ATP-dependent pump, pulling dsDNA into and through the RuvAB complex. RuvB forms 2 homohexamers on either side of HJ DNA bound by 1 or 2 RuvA tetramers; 4 subunits per hexamer contact DNA at a time. Coordinated motions by a converter formed by DNA-disengaged RuvB subunits stimulates ATP hydrolysis and nucleotide exchange. Immobilization of the converter enables RuvB to convert the ATP-contained energy into a lever motion, pulling 2 nucleotides of DNA out of the RuvA tetramer per ATP hydrolyzed, thus driving DNA branch migration. The RuvB motors rotate together with the DNA substrate, which together with the progressing nucleotide cycle form the mechanistic basis for DNA recombination by continuous HJ branch migration. Branch migration allows RuvC to scan DNA until it finds its consensus sequence, where it cleaves and resolves cruciform DNA. The protein is Holliday junction branch migration complex subunit RuvB of Lactobacillus helveticus (strain DPC 4571).